A 560-amino-acid polypeptide reads, in one-letter code: Chaperonin GroEL 2 (560 aa).

ATP is bound by residues 29-32, 86-90, G413, 478-480, and D494; these read TLGP, DGTTT, and NAA.

The protein belongs to the chaperonin (HSP60) family. As to quaternary structure, forms a cylinder of 14 subunits composed of two heptameric rings stacked back-to-back. Interacts with the co-chaperonin GroES.

It localises to the cytoplasm. The enzyme catalyses ATP + H2O + a folded polypeptide = ADP + phosphate + an unfolded polypeptide.. Together with its co-chaperonin GroES, plays an essential role in assisting protein folding. The GroEL-GroES system forms a nano-cage that allows encapsulation of the non-native substrate proteins and provides a physical environment optimized to promote and accelerate protein folding. This Nostoc sp. (strain PCC 7120 / SAG 25.82 / UTEX 2576) protein is Chaperonin GroEL 2.